We begin with the raw amino-acid sequence, 438 residues long: AP-2 complex subunit mu (438 aa).

In terms of domain architecture, MHD spans 177–437 (KNEVFLDIVE…ITKAGSYEIR (261 aa)).

The protein belongs to the adaptor complexes medium subunit family. Adaptor protein complex 2 (AP-2) is a heterotetramer composed of two large adaptins (alpha-type and beta-type subunits), a medium adaptin (mu-type subunit) and a small adaptin (sigma-type subunit).

It is found in the cell membrane. It localises to the membrane. The protein resides in the coated pit. The protein localises to the golgi apparatus. Its subcellular location is the trans-Golgi network membrane. Subunit of the adaptor protein complex 2 (AP-2). Adaptor protein complexes function in protein transport via transport vesicles in different membrane traffic pathways. Adaptor protein complexes are vesicle coat components and appear to be involved in cargo selection and vesicle formation. AP-2 is involved in clathrin-dependent endocytosis in which cargo proteins are incorporated into vesicles surrounded by clathrin (clathrin-coated vesicles, CCVs) which are destined for fusion with the early endosome. AP-2 recognizes Y-X-X-Phi endocytosis signal motif within the cytosolic tails of transmembrane cargo molecules. The complex binds polyphosphoinositides. This chain is AP-2 complex subunit mu (AP2M), found in Arabidopsis thaliana (Mouse-ear cress).